Here is a 208-residue protein sequence, read N- to C-terminus: OVARIAN TUMOR DOMAIN-containing deubiquitinating enzyme 2 (208 aa).

Residues 5-127 (IVRRVIPSDN…GLHYDALALS (123 aa)) enclose the OTU domain. D13 is a catalytic residue. C16 functions as the Nucleophile in the catalytic mechanism. Catalysis depends on residues H120 and H201.

Belongs to the peptidase C85 family.

It catalyses the reaction Thiol-dependent hydrolysis of ester, thioester, amide, peptide and isopeptide bonds formed by the C-terminal Gly of ubiquitin (a 76-residue protein attached to proteins as an intracellular targeting signal).. Hydrolase that can remove conjugated ubiquitin from proteins in vitro and may therefore play an important regulatory role at the level of protein turnover by preventing degradation. Cysteine protease with a preference for 'Lys-63' and 'Lys-48' -linked ubiquitin (UB) tetramers as substrates. The chain is OVARIAN TUMOR DOMAIN-containing deubiquitinating enzyme 2 from Arabidopsis thaliana (Mouse-ear cress).